The following is a 379-amino-acid chain: ATP phosphoribosyltransferase regulatory subunit (379 aa).

Belongs to the class-II aminoacyl-tRNA synthetase family. HisZ subfamily. As to quaternary structure, heteromultimer composed of HisG and HisZ subunits.

Its subcellular location is the cytoplasm. It participates in amino-acid biosynthesis; L-histidine biosynthesis; L-histidine from 5-phospho-alpha-D-ribose 1-diphosphate: step 1/9. In terms of biological role, required for the first step of histidine biosynthesis. May allow the feedback regulation of ATP phosphoribosyltransferase activity by histidine. This chain is ATP phosphoribosyltransferase regulatory subunit, found in Caldanaerobacter subterraneus subsp. tengcongensis (strain DSM 15242 / JCM 11007 / NBRC 100824 / MB4) (Thermoanaerobacter tengcongensis).